Here is a 296-residue protein sequence, read N- to C-terminus: L-fucono-1,5-lactonase (296 aa).

This sequence belongs to the metallo-dependent hydrolases superfamily. In terms of assembly, monomer. Requires Does not require a divalent metal for activity. The purified enzyme contains Zn(2+), but the addition of chelators does not diminish the catalytic activity of the enzyme, indicating that it does not require a divalent cation for substrate turnover. as cofactor.

The enzyme catalyses L-fucono-1,5-lactone + H2O = L-fuconate + H(+). It catalyses the reaction L-fucono-1,4-lactone + H2O = L-fuconate + H(+). The catalysed reaction is D-arabinono-1,4-lactone + H2O = D-arabinonate + H(+). It carries out the reaction L-xylono-1,4-lactone + H2O = L-xylonate + H(+). The enzyme catalyses L-galactono-1,4-lactone + H2O = L-galactonate + H(+). It participates in carbohydrate degradation; L-fucose degradation. Functionally, L-fucono-1,5-lactonase involved in an L-fucose degradation pathway. Catalyzes the hydrolysis of L-fucono-1,5-lactone to L-fuconate. L-fucono-1,5-lactone is the best substrate, but the enzyme can also hydrolyze L-fucono-1,4-lactone, L-galactono-1,4-lactone D-arabinono-1,4-lactone and L-xylono-1,4-lactone. The protein is L-fucono-1,5-lactonase of Burkholderia multivorans (strain ATCC 17616 / 249).